Here is a 367-residue protein sequence, read N- to C-terminus: tRNA/tmRNA (uracil-C(5))-methyltransferase (367 aa).

S-adenosyl-L-methionine is bound by residues Gln182, Tyr210, Asn215, Glu231, and Asp293. Cys318 (nucleophile) is an active-site residue. Glu352 serves as the catalytic Proton acceptor.

This sequence belongs to the class I-like SAM-binding methyltransferase superfamily. RNA M5U methyltransferase family. TrmA subfamily.

It carries out the reaction uridine(54) in tRNA + S-adenosyl-L-methionine = 5-methyluridine(54) in tRNA + S-adenosyl-L-homocysteine + H(+). It catalyses the reaction uridine(341) in tmRNA + S-adenosyl-L-methionine = 5-methyluridine(341) in tmRNA + S-adenosyl-L-homocysteine + H(+). Its function is as follows. Dual-specificity methyltransferase that catalyzes the formation of 5-methyluridine at position 54 (m5U54) in all tRNAs, and that of position 341 (m5U341) in tmRNA (transfer-mRNA). The sequence is that of tRNA/tmRNA (uracil-C(5))-methyltransferase from Neisseria meningitidis serogroup C (strain 053442).